The chain runs to 89 residues: Small ribosomal subunit protein uS15 (89 aa).

The protein belongs to the universal ribosomal protein uS15 family. In terms of assembly, part of the 30S ribosomal subunit. Forms a bridge to the 50S subunit in the 70S ribosome, contacting the 23S rRNA.

Functionally, one of the primary rRNA binding proteins, it binds directly to 16S rRNA where it helps nucleate assembly of the platform of the 30S subunit by binding and bridging several RNA helices of the 16S rRNA. Its function is as follows. Forms an intersubunit bridge (bridge B4) with the 23S rRNA of the 50S subunit in the ribosome. The chain is Small ribosomal subunit protein uS15 from Shouchella clausii (strain KSM-K16) (Alkalihalobacillus clausii).